A 445-amino-acid polypeptide reads, in one-letter code: Phosphoglucosamine mutase (445 aa).

Catalysis depends on S102, which acts as the Phosphoserine intermediate. The Mg(2+) site is built by S102, D241, D243, and D245. Residue S102 is modified to Phosphoserine.

This sequence belongs to the phosphohexose mutase family. Requires Mg(2+) as cofactor. Activated by phosphorylation.

It catalyses the reaction alpha-D-glucosamine 1-phosphate = D-glucosamine 6-phosphate. Functionally, catalyzes the conversion of glucosamine-6-phosphate to glucosamine-1-phosphate. The polypeptide is Phosphoglucosamine mutase (Photorhabdus laumondii subsp. laumondii (strain DSM 15139 / CIP 105565 / TT01) (Photorhabdus luminescens subsp. laumondii)).